The following is a 241-amino-acid chain: Translation initiation factor IF-3 (241 aa).

Basic and acidic residues predominate over residues 193 to 203 (AAEKARQKAIQ). The disordered stretch occupies residues 193-241 (AAEKARQKAIQEGRAAPAQDDTEDEEIEKLERELEEQDDEDDDEAEATE). A compositionally biased stretch (acidic residues) spans 212–241 (DDTEDEEIEKLERELEEQDDEDDDEAEATE).

This sequence belongs to the IF-3 family. As to quaternary structure, monomer.

The protein localises to the cytoplasm. In terms of biological role, IF-3 binds to the 30S ribosomal subunit and shifts the equilibrium between 70S ribosomes and their 50S and 30S subunits in favor of the free subunits, thus enhancing the availability of 30S subunits on which protein synthesis initiation begins. The sequence is that of Translation initiation factor IF-3 from Sorangium cellulosum (strain So ce56) (Polyangium cellulosum (strain So ce56)).